Reading from the N-terminus, the 586-residue chain is Non-structural glycoprotein GNS (586 aa).

Residues 1-14 form the signal peptide; sequence MFLQLFNIVLIYGV. The Extracellular segment spans residues 15–544; that stretch reads RTSQSTWINY…QNKEYWNEES (530 aa). N-linked (GlcNAc...) asparagine; by host glycosylation is found at N27, N68, N274, N350, N383, N476, N501, and N521. A helical membrane pass occupies residues 545-562; it reads SIWGISTIITVLGIYYIY. Residues 563 to 586 are Cytoplasmic-facing; it reads RKNRREKIFLNMKHRVQRFFKLDY.

This sequence belongs to the ephemerovirus glycoprotein family.

It is found in the host membrane. This is Non-structural glycoprotein GNS (GNS) from Bos taurus (Bovine).